The chain runs to 249 residues: ATP synthase subunit a (249 aa).

The next 6 helical transmembrane spans lie at 26-46, 84-104, 114-134, 143-163, 185-205, and 208-228; these read FTNV…FLYL, FFPF…IGLF, IIVT…YGFF, LFVP…IEII, ITLK…ALGI, and TVLP…VAFL.

Belongs to the ATPase A chain family. As to quaternary structure, F-type ATPases have 2 components, CF(1) - the catalytic core - and CF(0) - the membrane proton channel. CF(1) has five subunits: alpha(3), beta(3), gamma(1), delta(1), epsilon(1). CF(0) has three main subunits: a(1), b(2) and c(9-12). The alpha and beta chains form an alternating ring which encloses part of the gamma chain. CF(1) is attached to CF(0) by a central stalk formed by the gamma and epsilon chains, while a peripheral stalk is formed by the delta and b chains.

The protein localises to the cell inner membrane. In terms of biological role, key component of the proton channel; it plays a direct role in the translocation of protons across the membrane. This Brucella ovis (strain ATCC 25840 / 63/290 / NCTC 10512) protein is ATP synthase subunit a.